Reading from the N-terminus, the 593-residue chain is Aspartate--tRNA ligase (593 aa).

Position 180 (Glu-180) interacts with L-aspartate. The tract at residues 204-207 is aspartate; it reads QIFK. Arg-226 provides a ligand contact to L-aspartate. ATP contacts are provided by residues 226 to 228 and Gln-235; that span reads RDE. L-aspartate is bound at residue His-453. Glu-487 is an ATP binding site. Residue Arg-494 coordinates L-aspartate. Position 539–542 (539–542) interacts with ATP; it reads GLDR.

This sequence belongs to the class-II aminoacyl-tRNA synthetase family. Type 1 subfamily. As to quaternary structure, homodimer.

Its subcellular location is the cytoplasm. It catalyses the reaction tRNA(Asp) + L-aspartate + ATP = L-aspartyl-tRNA(Asp) + AMP + diphosphate. In terms of biological role, catalyzes the attachment of L-aspartate to tRNA(Asp) in a two-step reaction: L-aspartate is first activated by ATP to form Asp-AMP and then transferred to the acceptor end of tRNA(Asp). In Clostridium botulinum (strain Kyoto / Type A2), this protein is Aspartate--tRNA ligase.